The primary structure comprises 157 residues: Endoribonuclease YbeY (157 aa).

Residues H114, H118, and H124 each contribute to the Zn(2+) site.

This sequence belongs to the endoribonuclease YbeY family. It depends on Zn(2+) as a cofactor.

The protein localises to the cytoplasm. Single strand-specific metallo-endoribonuclease involved in late-stage 70S ribosome quality control and in maturation of the 3' terminus of the 16S rRNA. This Yersinia pestis protein is Endoribonuclease YbeY.